Here is a 508-residue protein sequence, read N- to C-terminus: Phenylalanine--tRNA ligase alpha subunit (508 aa).

A2 is modified (N-acetylalanine). The residue at position 190 (T190) is a Phosphothreonine. Residues S193 and S301 each carry the phosphoserine modification. Residue K311 is modified to N6-acetyllysine. Residues T329, Q372–E374, and Y412 contribute to the L-phenylalanine site. E414 serves as a coordination point for Mg(2+). F438 serves as a coordination point for L-phenylalanine.

It belongs to the class-II aminoacyl-tRNA synthetase family. Phe-tRNA synthetase alpha subunit type 2 subfamily. In terms of assembly, heterotetramer; dimer of two heterodimers formed by FARSA and FARSB. Requires Mg(2+) as cofactor.

It localises to the cytoplasm. The catalysed reaction is tRNA(Phe) + L-phenylalanine + ATP = L-phenylalanyl-tRNA(Phe) + AMP + diphosphate + H(+). The polypeptide is Phenylalanine--tRNA ligase alpha subunit (FARSA) (Pongo abelii (Sumatran orangutan)).